Reading from the N-terminus, the 320-residue chain is Histidine decarboxylase proenzyme (320 aa).

Positions 2–11 (NKNLEANRNR) are excised as a propeptide. A Pyruvic acid (Ser) modification is found at Ser98. Glu215 serves as the catalytic Proton donor.

As to quaternary structure, the proenzyme is a hexamer of identical pi chains; each pi chain monomer is cleaved to form a small (or beta) chain and a large (or alpha) chain by non-hydrolytic self-catalysis. Pyruvate serves as cofactor.

The catalysed reaction is L-histidine + H(+) = histamine + CO2. The polypeptide is Histidine decarboxylase proenzyme (hdc) (Clostridium perfringens (strain 13 / Type A)).